The chain runs to 478 residues: Putative multidrug resistance outer membrane protein MdtQ (478 aa).

The signal sequence occupies residues 1 to 21; that stretch reads MNRDSFYPAIACFPLLLMLAG. Cys-22 carries N-palmitoyl cysteine lipidation. A lipid anchor (S-diacylglycerol cysteine) is attached at Cys-22.

It belongs to the outer membrane factor (OMF) (TC 1.B.17) family.

Its subcellular location is the cell outer membrane. Functionally, could be involved in resistance to puromycin, acriflavine and tetraphenylarsonium chloride. The chain is Putative multidrug resistance outer membrane protein MdtQ (mdtQ) from Shigella flexneri.